A 385-amino-acid polypeptide reads, in one-letter code: Chaperone protein DnaJ (385 aa).

The J domain maps to 5–70 (DYYEVLGVAK…QKRAAYDRFG (66 aa)). The CR-type zinc-finger motif lies at 141–219 (GKTETIRIPT…CSGAGRVNRE (79 aa)). Residues Cys-154, Cys-157, Cys-171, Cys-174, Cys-193, Cys-196, Cys-207, and Cys-210 each coordinate Zn(2+). CXXCXGXG motif repeat units lie at residues 154-161 (CETCSGTG), 171-178 (CSTCGGYG), 193-200 (CPNCHGRG), and 207-214 (CTACSGAG).

It belongs to the DnaJ family. In terms of assembly, homodimer. Zn(2+) is required as a cofactor.

Its subcellular location is the cytoplasm. In terms of biological role, participates actively in the response to hyperosmotic and heat shock by preventing the aggregation of stress-denatured proteins and by disaggregating proteins, also in an autonomous, DnaK-independent fashion. Unfolded proteins bind initially to DnaJ; upon interaction with the DnaJ-bound protein, DnaK hydrolyzes its bound ATP, resulting in the formation of a stable complex. GrpE releases ADP from DnaK; ATP binding to DnaK triggers the release of the substrate protein, thus completing the reaction cycle. Several rounds of ATP-dependent interactions between DnaJ, DnaK and GrpE are required for fully efficient folding. Also involved, together with DnaK and GrpE, in the DNA replication of plasmids through activation of initiation proteins. In Methylorubrum extorquens (strain PA1) (Methylobacterium extorquens), this protein is Chaperone protein DnaJ.